The following is a 147-amino-acid chain: 3-dehydroquinate dehydratase (147 aa).

Tyrosine 23 serves as the catalytic Proton acceptor. Asparagine 74, histidine 80, and aspartate 87 together coordinate substrate. The active-site Proton donor is histidine 100. Substrate contacts are provided by residues 101-102 (LS) and arginine 111.

It belongs to the type-II 3-dehydroquinase family. In terms of assembly, homododecamer.

The enzyme catalyses 3-dehydroquinate = 3-dehydroshikimate + H2O. It participates in metabolic intermediate biosynthesis; chorismate biosynthesis; chorismate from D-erythrose 4-phosphate and phosphoenolpyruvate: step 3/7. Catalyzes a trans-dehydration via an enolate intermediate. This chain is 3-dehydroquinate dehydratase, found in Clostridium botulinum (strain 657 / Type Ba4).